Consider the following 396-residue polypeptide: Multidrug resistance protein MdtL (396 aa).

Residues 1-4 (MFRY) lie on the Cytoplasmic side of the membrane. The chain crosses the membrane as a helical span at residues 5–25 (LLCCFGLVLMYPTGIDMYLVG). Residues 26–41 (LPQIANQLGATEAQLH) are Periplasmic-facing. Residues 42–62 (IAFSVYLAGMATTMLFAGSLA) form a helical membrane-spanning segment. Over 63 to 64 (DR) the chain is Cytoplasmic. The chain crosses the membrane as a helical span at residues 65–85 (IGRKPITLFSALLFALASYFA). The Periplasmic portion of the chain corresponds to 86-92 (ARSQSSD). The chain crosses the membrane as a helical span at residues 93-113 (LFLVARFVQGVGAGCCYVVAF). The Cytoplasmic segment spans residues 114–131 (AILRDALDDKRRAKVLSM). The helical transmembrane segment at 132–152 (VNGVTCIIPVIAPVIGHLIML) threads the bilayer. Residues 153 to 157 (RFPWP) are Periplasmic-facing. The helical transmembrane segment at 158–178 (SLFYTMAVMGLLVFGLCLFVL) threads the bilayer. Residues 179 to 209 (RETYSKASFHSQTLPRVQTESFKQGFFISRV) are Cytoplasmic-facing. Residues 210 to 230 (VITTLGVTTILSYVNVSPMLI) traverse the membrane as a helical segment. Residues 231 to 242 (MGQMGFDRGQYS) lie on the Periplasmic side of the membrane. Residues 243–263 (NTMAMTALVSMLASFSTPFLL) traverse the membrane as a helical segment. The Cytoplasmic segment spans residues 264-277 (NQFKEKSLILFSQT). The next 2 membrane-spanning stretches (helical) occupy residues 278-298 (LFAA…GQLF) and 299-319 (NLLG…VTMS). The Cytoplasmic segment spans residues 320–333 (QALSPFVARAGVAS). A helical transmembrane segment spans residues 334-354 (SLLGIAQVCTSALYIWVMGLL). The Periplasmic segment spans residues 355–360 (EVSAIN). Residues 361–381 (ILLAILAVGALISITLMLAVP) form a helical membrane-spanning segment. The Cytoplasmic segment spans residues 382–396 (KLSEMVANEQIPESA).

This sequence belongs to the major facilitator superfamily. DHA1 family. MdtL (TC 2.A.1.2.22) subfamily.

The protein localises to the cell inner membrane. The protein is Multidrug resistance protein MdtL of Shewanella sp. (strain ANA-3).